The primary structure comprises 86 residues: U15-lycotoxin-Ls1g (86 aa).

Positions 1–20 (MNSKIFAVLLLLGLLSCVLS) are cleaved as a signal peptide. Residues 21 to 66 (DQYCPKSSITACKKMNIRNDCCKDDDCTGGSWCCATPCGNFCKYPA) form the WAP domain. Disulfide bonds link cysteine 24–cysteine 54, cysteine 32–cysteine 58, cysteine 41–cysteine 53, cysteine 42–cysteine 80, and cysteine 47–cysteine 62.

The protein belongs to the venom protein 11 family. 01 (wap-1) subfamily. In terms of processing, contains 5 disulfide bonds. Expressed by the venom gland.

It localises to the secreted. Its function is as follows. Has antibacterial activity. The protein is U15-lycotoxin-Ls1g of Lycosa singoriensis (Wolf spider).